The primary structure comprises 359 residues: Double-stranded RNA-binding protein 3 (359 aa).

2 consecutive DRBM domains span residues 1–70 and 87–155; these read MYKN…ALSS and IYKN…SLRK. The segment covering 266–280 has biased composition (basic and acidic residues); that stretch reads EKKQSLDDPKPEMRI. Disordered stretches follow at residues 266–292 and 328–359; these read EKKQ…SSSV and APPP…SLPN. Positions 328–338 are enriched in pro residues; the sequence is APPPKPNPNPN.

Functionally, binds double-stranded RNA. This chain is Double-stranded RNA-binding protein 3 (DRB3), found in Arabidopsis thaliana (Mouse-ear cress).